A 238-amino-acid polypeptide reads, in one-letter code: Ribonuclease PH (238 aa).

Phosphate is bound by residues Arg-86 and 124–126 (GTR).

It belongs to the RNase PH family. In terms of assembly, homohexameric ring arranged as a trimer of dimers.

It carries out the reaction tRNA(n+1) + phosphate = tRNA(n) + a ribonucleoside 5'-diphosphate. In terms of biological role, phosphorolytic 3'-5' exoribonuclease that plays an important role in tRNA 3'-end maturation. Removes nucleotide residues following the 3'-CCA terminus of tRNAs; can also add nucleotides to the ends of RNA molecules by using nucleoside diphosphates as substrates, but this may not be physiologically important. Probably plays a role in initiation of 16S rRNA degradation (leading to ribosome degradation) during starvation. This chain is Ribonuclease PH, found in Marinobacter nauticus (strain ATCC 700491 / DSM 11845 / VT8) (Marinobacter aquaeolei).